Here is a 381-residue protein sequence, read N- to C-terminus: Homoserine O-succinyltransferase (381 aa).

The 316-residue stretch at 45 to 360 (NAVLVCHALN…PHGHDAFLLD (316 aa)) folds into the AB hydrolase-1 domain. Ser151 (nucleophile) is an active-site residue. Substrate is bound at residue Arg221. Active-site residues include Asp321 and His354. Position 355 (Asp355) interacts with substrate.

Belongs to the AB hydrolase superfamily. MetX family. As to quaternary structure, homodimer.

The protein localises to the cytoplasm. It carries out the reaction L-homoserine + succinyl-CoA = O-succinyl-L-homoserine + CoA. It participates in amino-acid biosynthesis; L-methionine biosynthesis via de novo pathway; O-succinyl-L-homoserine from L-homoserine: step 1/1. Functionally, transfers a succinyl group from succinyl-CoA to L-homoserine, forming succinyl-L-homoserine. The chain is Homoserine O-succinyltransferase from Burkholderia thailandensis (strain ATCC 700388 / DSM 13276 / CCUG 48851 / CIP 106301 / E264).